We begin with the raw amino-acid sequence, 126 residues long: MEKALSLVVFIIFSIMLASVENKVNANTCIEGIGNCQQCDVRCKARHGPAAKGACDSKFQLCTCNYPCGQGPSPPQPKKCYGGAGICSDRCGAQCCNQNCAQKYNQGSGFCDSIGNTSLCKCQYNC.

Residues 1-26 (MEKALSLVVFIIFSIMLASVENKVNA) form the signal peptide. 8 disulfide bridges follow: cysteine 29–cysteine 68, cysteine 36–cysteine 55, cysteine 39–cysteine 62, cysteine 43–cysteine 64, cysteine 80–cysteine 126, cysteine 91–cysteine 111, cysteine 96–cysteine 120, and cysteine 100–cysteine 122.

The protein belongs to the DEFL family.

It localises to the secreted. This chain is Defensin-like protein 183 (LCR19), found in Arabidopsis thaliana (Mouse-ear cress).